A 364-amino-acid chain; its full sequence is Probable dual-specificity RNA methyltransferase RlmN (364 aa).

Glu-107 functions as the Proton acceptor in the catalytic mechanism. The region spanning 113–346 (HDYGNSVCVT…ATIRREQGSD (234 aa)) is the Radical SAM core domain. A disulfide bond links Cys-120 and Cys-351. [4Fe-4S] cluster is bound by residues Cys-127, Cys-131, and Cys-134. Residues 177 to 178 (GE), Ser-209, 232 to 234 (SLH), and Asn-308 contribute to the S-adenosyl-L-methionine site. The active-site S-methylcysteine intermediate is the Cys-351.

The protein belongs to the radical SAM superfamily. RlmN family. [4Fe-4S] cluster serves as cofactor.

The protein resides in the cytoplasm. The catalysed reaction is adenosine(2503) in 23S rRNA + 2 reduced [2Fe-2S]-[ferredoxin] + 2 S-adenosyl-L-methionine = 2-methyladenosine(2503) in 23S rRNA + 5'-deoxyadenosine + L-methionine + 2 oxidized [2Fe-2S]-[ferredoxin] + S-adenosyl-L-homocysteine. The enzyme catalyses adenosine(37) in tRNA + 2 reduced [2Fe-2S]-[ferredoxin] + 2 S-adenosyl-L-methionine = 2-methyladenosine(37) in tRNA + 5'-deoxyadenosine + L-methionine + 2 oxidized [2Fe-2S]-[ferredoxin] + S-adenosyl-L-homocysteine. In terms of biological role, specifically methylates position 2 of adenine 2503 in 23S rRNA and position 2 of adenine 37 in tRNAs. Confers resistance to some classes of antibiotics. In Staphylococcus aureus (strain MW2), this protein is Probable dual-specificity RNA methyltransferase RlmN.